A 453-amino-acid chain; its full sequence is Ribosomal protein uS12 methylthiotransferase RimO (453 aa).

In terms of domain architecture, MTTase N-terminal spans 6–116; sequence PKVGFVSLGC…VMEAVHEALP (111 aa). Cysteine 15, cysteine 51, cysteine 80, cysteine 147, cysteine 151, and cysteine 154 together coordinate [4Fe-4S] cluster. Positions 133–370 constitute a Radical SAM core domain; it reads LTPRHYAYLK…MEKQAQISAA (238 aa). Residues 373–441 enclose the TRAM domain; it reads EAKIGTVQQC…DHDLYGDALP (69 aa).

This sequence belongs to the methylthiotransferase family. RimO subfamily. The cofactor is [4Fe-4S] cluster.

The protein localises to the cytoplasm. It catalyses the reaction L-aspartate(89)-[ribosomal protein uS12]-hydrogen + (sulfur carrier)-SH + AH2 + 2 S-adenosyl-L-methionine = 3-methylsulfanyl-L-aspartate(89)-[ribosomal protein uS12]-hydrogen + (sulfur carrier)-H + 5'-deoxyadenosine + L-methionine + A + S-adenosyl-L-homocysteine + 2 H(+). Functionally, catalyzes the methylthiolation of an aspartic acid residue of ribosomal protein uS12. The chain is Ribosomal protein uS12 methylthiotransferase RimO from Stenotrophomonas maltophilia (strain R551-3).